The chain runs to 287 residues: Putative syntaxin-4 (287 aa).

Residues 1–262 are Cytoplasmic-facing; that stretch reads MHQISGINAA…NRKWKIVTCI (262 aa). A coiled-coil region spans residues 65–97; sequence KCRKLNDHVDKFIAQARGIRRRLADASEELVQY. In terms of domain architecture, t-SNARE coiled-coil homology spans 184–246; that stretch reads FDDMKNRATD…EQAQQNVRQA (63 aa). The chain crosses the membrane as a helical; Anchor for type IV membrane protein span at residues 263–283; that stretch reads ALIVLLLVVVYLLSHFLGAII. Over 284–287 the chain is Extracellular; the sequence is PGWK.

It belongs to the syntaxin family.

The protein resides in the membrane. Functionally, potentially involved in docking of synaptic vesicles at presynaptic active zones. In Caenorhabditis elegans, this protein is Putative syntaxin-4 (syx-4).